The primary structure comprises 251 residues: B3 domain-containing protein REM7 (251 aa).

2 consecutive DNA-binding regions (TF-B3) follow at residues 11–103 (NSHF…LGPS) and 170–251 (CFVA…SRLN).

It is found in the nucleus. This is B3 domain-containing protein REM7 (REM7) from Arabidopsis thaliana (Mouse-ear cress).